We begin with the raw amino-acid sequence, 256 residues long: Flap endonuclease Xni (256 aa).

Mg(2+) is bound at residue Asp-105. The 5'-3' exonuclease domain maps to 164–250 (SQFIDFLAMA…LNTRLANFRV (87 aa)). Residues Met-172, Ala-173, Pro-181, Ile-183, and Ile-186 each coordinate K(+). The segment at 185–190 (GIGPKS) is interaction with DNA.

It belongs to the Xni family. The cofactor is Mg(2+). It depends on K(+) as a cofactor.

Its function is as follows. Has flap endonuclease activity. During DNA replication, flap endonucleases cleave the 5'-overhanging flap structure that is generated by displacement synthesis when DNA polymerase encounters the 5'-end of a downstream Okazaki fragment. This is Flap endonuclease Xni from Shewanella loihica (strain ATCC BAA-1088 / PV-4).